Reading from the N-terminus, the 1333-residue chain is Elongator complex protein 1 (1333 aa).

Phosphoserine is present on residues Ser-805, Ser-1172, and Ser-1175. Residues 886–1333 (VDVNELFNHS…RSQWKLSLLE (448 aa)) form a mediates dimerization region. Positions 1175 to 1209 (SGSEMSGRYSHSNSRISARSSKNRRKAERKKHSLK) are disordered. The segment at 1192–1210 (ARSSKNRRKAERKKHSLKE) is required for binding to tRNA. Positions 1195–1207 (SKNRRKAERKKHS) are enriched in basic residues.

This sequence belongs to the ELP1/IKA1 family. As to quaternary structure, homodimer; dimerization promotes ELP1 stability and elongator complex formation. Component of the elongator complex which consists of ELP1, ELP2, ELP3, ELP4, ELP5 and ELP6. Interacts preferentially with MAP3K14/NIK followed by IKK-alpha and IKK-beta. Phosphorylated. In terms of tissue distribution, in the testis, expression is restricted to germ cells during spermatogenesis with no expression detected in somatic cells such as Sertoli cells or Leydig cells (at protein level). In the ovary, expressed in oocytes of primary, secondary and antral follicles (at protein level). Widely expressed in adult tissues with highest levels in brain and also expressed at all embryonic stages.

Its subcellular location is the cytoplasm. The protein resides in the nucleus. Its pathway is tRNA modification; 5-methoxycarbonylmethyl-2-thiouridine-tRNA biosynthesis. Its function is as follows. Component of the elongator complex which is required for multiple tRNA modifications, including mcm5U (5-methoxycarbonylmethyl uridine), mcm5s2U (5-methoxycarbonylmethyl-2-thiouridine), and ncm5U (5-carbamoylmethyl uridine). The elongator complex catalyzes the formation of carboxymethyluridine in the wobble base at position 34 in tRNAs. Regulates the migration and branching of projection neurons in the developing cerebral cortex, through a process depending on alpha-tubulin acetylation. ELP1 binds to tRNA, mediating interaction of the elongator complex with tRNA. May act as a scaffold protein that assembles active IKK-MAP3K14 complexes (IKKA, IKKB and MAP3K14/NIK). This Mus musculus (Mouse) protein is Elongator complex protein 1 (Elp1).